Reading from the N-terminus, the 207-residue chain is NADH-ubiquinone oxidoreductase chain 6 (207 aa).

The next 5 membrane-spanning stretches (helical) occupy residues 1–21 (MDFLFYIFSSLTLISGSLVIQ), 28–48 (SVLFLVLVFFNAAGLLVLLGL), 50–70 (FFALIFLVVYVGAIAVLFLFV), 88–108 (YLPVGGVLGVLFLFEICILID), and 158–178 (FYFFLVASLILLVAMIGAIVL).

It belongs to the complex I subunit 6 family.

Its subcellular location is the mitochondrion membrane. The catalysed reaction is a ubiquinone + NADH + 5 H(+)(in) = a ubiquinol + NAD(+) + 4 H(+)(out). Core subunit of the mitochondrial membrane respiratory chain NADH dehydrogenase (Complex I) that is believed to belong to the minimal assembly required for catalysis. Complex I functions in the transfer of electrons from NADH to the respiratory chain. The immediate electron acceptor for the enzyme is believed to be ubiquinone. In Prototheca wickerhamii, this protein is NADH-ubiquinone oxidoreductase chain 6 (ND6).